The following is a 215-amino-acid chain: Adenylate kinase (215 aa).

10–15 lines the ATP pocket; it reads GAGKGT. The segment at 30-59 is NMP; sequence STGDILRANVREGTELGLAAKAYMDKGELV. Residues T31, R36, 57-59, 85-88, and Q92 contribute to the AMP site; these read ELV and GYPR. Positions 126-162 are LID; sequence GRLMCKCGASYHTIANPPKKDNICDICGGEVYQRDDD. R127 provides a ligand contact to ATP. The Zn(2+) site is built by C130 and C132. 135–136 contacts ATP; the sequence is SY. Zn(2+) is bound by residues C149 and C152. AMP-binding residues include R159 and R170. Residue K198 participates in ATP binding.

It belongs to the adenylate kinase family. In terms of assembly, monomer.

It is found in the cytoplasm. It carries out the reaction AMP + ATP = 2 ADP. Its pathway is purine metabolism; AMP biosynthesis via salvage pathway; AMP from ADP: step 1/1. Catalyzes the reversible transfer of the terminal phosphate group between ATP and AMP. Plays an important role in cellular energy homeostasis and in adenine nucleotide metabolism. This is Adenylate kinase from Methanosarcina mazei (strain ATCC BAA-159 / DSM 3647 / Goe1 / Go1 / JCM 11833 / OCM 88) (Methanosarcina frisia).